Here is a 315-residue protein sequence, read N- to C-terminus: Methionyl-tRNA formyltransferase (315 aa).

A (6S)-5,6,7,8-tetrahydrofolate-binding site is contributed by 115–118 (SLLP).

This sequence belongs to the Fmt family.

The enzyme catalyses L-methionyl-tRNA(fMet) + (6R)-10-formyltetrahydrofolate = N-formyl-L-methionyl-tRNA(fMet) + (6S)-5,6,7,8-tetrahydrofolate + H(+). Attaches a formyl group to the free amino group of methionyl-tRNA(fMet). The formyl group appears to play a dual role in the initiator identity of N-formylmethionyl-tRNA by promoting its recognition by IF2 and preventing the misappropriation of this tRNA by the elongation apparatus. The chain is Methionyl-tRNA formyltransferase from Dehalococcoides mccartyi (strain ATCC BAA-2100 / JCM 16839 / KCTC 5957 / BAV1).